The primary structure comprises 185 residues: Homeobox protein TGIF2LY (185 aa).

Disordered stretches follow at residues 1–58 (MEAA…GNLP) and 166–185 (RCQE…SSPE). A compositionally biased stretch (polar residues) spans 21–39 (AKTQSPAQDTSIMSRNNAD). A DNA-binding region (homeobox; TALE-type) is located at residues 48–111 (EHKKKRKGNL…INARRRILPD (64 aa)).

Belongs to the TALE/TGIF homeobox family. In terms of tissue distribution, specifically expressed in adult testis.

The protein resides in the nucleus. In terms of biological role, may have a transcription role in testis. May act as a competitor/regulator of TGIF2LX. The polypeptide is Homeobox protein TGIF2LY (TGIF2LY) (Homo sapiens (Human)).